A 294-amino-acid chain; its full sequence is Cyclin-dependent kinase A-1 (294 aa).

Residues 4–287 (YEKEEKIGEG…ARQALEHEYF (284 aa)) enclose the Protein kinase domain. ATP-binding positions include 10-18 (IGEGTYGVV) and Lys-33. Position 14 is a phosphothreonine (Thr-14). A Phosphotyrosine modification is found at Tyr-15. The active-site Proton acceptor is the Asp-127. Phosphothreonine; by CAK is present on Thr-161.

It belongs to the protein kinase superfamily. CMGC Ser/Thr protein kinase family. CDC2/CDKX subfamily. In terms of processing, phosphorylated at Thr-161 by CDKD-1. As to expression, expressed in the dividing region of the root apex and in differentiated cells such as those in the sclerenchyma, pericycle and parenchyma of the central cylinder.

The catalysed reaction is L-seryl-[protein] + ATP = O-phospho-L-seryl-[protein] + ADP + H(+). The enzyme catalyses L-threonyl-[protein] + ATP = O-phospho-L-threonyl-[protein] + ADP + H(+). It catalyses the reaction [DNA-directed RNA polymerase] + ATP = phospho-[DNA-directed RNA polymerase] + ADP + H(+). This chain is Cyclin-dependent kinase A-1 (CDKA-1), found in Oryza sativa subsp. japonica (Rice).